We begin with the raw amino-acid sequence, 97 residues long: YcgL domain-containing protein PST_1364 (97 aa).

A YcgL domain is found at L3–P87.

In Stutzerimonas stutzeri (strain A1501) (Pseudomonas stutzeri), this protein is YcgL domain-containing protein PST_1364.